A 606-amino-acid polypeptide reads, in one-letter code: MDDQNKNLILATALSFLVILVWFLLFPPEEPVTDPNAPTQITQSGETADVALTPPAAVTEAAPGAAPQTAATPTENAPRVQIDTPALEGSISLLGGRIDDLSLRNYNETLEPDSPIVRLLSPVDAPGAYYALYGWAPAGTLSFDDVPGANTLWTVESGDTLTVDTPVVLRWENGNGLIFRRTLAVDDDFMFTVTQSVENTTETDKRMQPYGIIARHGEPDTINFFVLHEGVVAMADGSLIESDYDDMLDYDFVEREGARAEVEQIEQNGWIGFTDKNWMTTLIPTPGQPFTSVAKYVGNADIYQTETRLPTQTVPGGQTVTVETRLFAGAKEWEAIRGYERELGIEGFIDSIDWGWFYFLTKPIFFVLHELNLLIGNMGVAIIVLTLLIKALLLPLAWKSYVSMARMKELQPEMEKLKEKAGDDRQKLQVAMMELYKKEKVNPAAGCLPILLQIPIFFSLYKVIFVTIELRHAPFFGPFQDLSAPDPTSIMNLFGLLPFASPEPGSILALIFIGILPLLLGISMWLQQKLNPAPTDPTQAMIFAWLPWVFMFMLGTFASGLIVYWIANNVITFAQQYFIMRRHGYKPDLFGNIVASFKKKKPSEDK.

The chain crosses the membrane as a helical span at residues L8 to P28. A compositionally biased stretch (low complexity) spans T59–P78. A disordered region spans residues T59–R79. Transmembrane regions (helical) follow at residues M378–W398, L448–I468, S506–L526, and I542–I562.

The protein belongs to the OXA1/ALB3/YidC family. Type 1 subfamily. In terms of assembly, interacts with the Sec translocase complex via SecD. Specifically interacts with transmembrane segments of nascent integral membrane proteins during membrane integration.

Its subcellular location is the cell inner membrane. In terms of biological role, required for the insertion and/or proper folding and/or complex formation of integral membrane proteins into the membrane. Involved in integration of membrane proteins that insert both dependently and independently of the Sec translocase complex, as well as at least some lipoproteins. Aids folding of multispanning membrane proteins. In Dinoroseobacter shibae (strain DSM 16493 / NCIMB 14021 / DFL 12), this protein is Membrane protein insertase YidC.